A 232-amino-acid polypeptide reads, in one-letter code: Ribose-5-phosphate isomerase A (232 aa).

Substrate-binding positions include 28-31 (TGST), 83-86 (DGAD), and 96-99 (KGGG). The Proton acceptor role is filled by glutamate 105. Lysine 123 provides a ligand contact to substrate.

It belongs to the ribose 5-phosphate isomerase family. As to quaternary structure, homodimer.

The catalysed reaction is aldehydo-D-ribose 5-phosphate = D-ribulose 5-phosphate. It functions in the pathway carbohydrate degradation; pentose phosphate pathway; D-ribose 5-phosphate from D-ribulose 5-phosphate (non-oxidative stage): step 1/1. In terms of biological role, catalyzes the reversible conversion of ribose-5-phosphate to ribulose 5-phosphate. The sequence is that of Ribose-5-phosphate isomerase A from Rhizobium etli (strain ATCC 51251 / DSM 11541 / JCM 21823 / NBRC 15573 / CFN 42).